A 469-amino-acid chain; its full sequence is Glutamate--tRNA ligase (469 aa).

Positions 9–19 (PSPTGFLHVGG) match the 'HIGH' region motif. Zn(2+) is bound by residues Cys-98, Cys-100, Cys-125, and Asp-127. The short motif at 236 to 240 (KLSKR) is the 'KMSKS' region element. Residue Lys-239 participates in ATP binding.

Belongs to the class-I aminoacyl-tRNA synthetase family. Glutamate--tRNA ligase type 1 subfamily. Monomer. Requires Zn(2+) as cofactor.

The protein resides in the cytoplasm. It catalyses the reaction tRNA(Glu) + L-glutamate + ATP = L-glutamyl-tRNA(Glu) + AMP + diphosphate. Functionally, catalyzes the attachment of glutamate to tRNA(Glu) in a two-step reaction: glutamate is first activated by ATP to form Glu-AMP and then transferred to the acceptor end of tRNA(Glu). This chain is Glutamate--tRNA ligase, found in Shewanella woodyi (strain ATCC 51908 / MS32).